A 355-amino-acid polypeptide reads, in one-letter code: Probable low-specificity L-threonine aldolase 2 (355 aa).

K211 bears the N6-(pyridoxal phosphate)lysine mark.

Belongs to the threonine aldolase family. Requires pyridoxal 5'-phosphate as cofactor. Expressed in roots, leaf vasculature and flowers.

It catalyses the reaction L-threonine = acetaldehyde + glycine. It carries out the reaction L-allo-threonine = acetaldehyde + glycine. Its pathway is amino-acid degradation; L-threonine degradation via aldolase pathway; acetaldehyde and glycine from L-threonine: step 1/1. Threonine aldolase involved in threonine degradation to glycine. May play a role in the removal of L-allo-threonine. In Arabidopsis thaliana (Mouse-ear cress), this protein is Probable low-specificity L-threonine aldolase 2 (THA2).